We begin with the raw amino-acid sequence, 204 residues long: Urease accessory protein UreE (204 aa).

Over residues 172–190 (HGHAHSHDHDHDHDHDHQH) the composition is skewed to basic and acidic residues. Residues 172–204 (HGHAHSHDHDHDHDHDHQHGPGCTHGHHGHDHH) are disordered.

It belongs to the UreE family.

The protein localises to the cytoplasm. Its function is as follows. Involved in urease metallocenter assembly. Binds nickel. Probably functions as a nickel donor during metallocenter assembly. The sequence is that of Urease accessory protein UreE from Burkholderia orbicola (strain AU 1054).